Reading from the N-terminus, the 71-residue chain is Small ribosomal subunit protein bS18 (71 aa).

This sequence belongs to the bacterial ribosomal protein bS18 family. In terms of assembly, part of the 30S ribosomal subunit. Forms a tight heterodimer with protein bS6.

Its function is as follows. Binds as a heterodimer with protein bS6 to the central domain of the 16S rRNA, where it helps stabilize the platform of the 30S subunit. In Nostoc sp. (strain PCC 7120 / SAG 25.82 / UTEX 2576), this protein is Small ribosomal subunit protein bS18.